The following is a 304-amino-acid chain: Acetylglutamate kinase (304 aa).

Substrate contacts are provided by residues 72–73 (GG), R94, and N199.

Belongs to the acetylglutamate kinase family. ArgB subfamily.

The protein localises to the cytoplasm. The catalysed reaction is N-acetyl-L-glutamate + ATP = N-acetyl-L-glutamyl 5-phosphate + ADP. The protein operates within amino-acid biosynthesis; L-arginine biosynthesis; N(2)-acetyl-L-ornithine from L-glutamate: step 2/4. Its function is as follows. Catalyzes the ATP-dependent phosphorylation of N-acetyl-L-glutamate. The chain is Acetylglutamate kinase from Methylobacterium nodulans (strain LMG 21967 / CNCM I-2342 / ORS 2060).